The following is a 1324-amino-acid chain: DNA-directed RNA polymerase subunit beta' (1324 aa).

Zn(2+) is bound by residues C219, C292, C299, and C302. A disordered region spans residues A1293–F1324. Acidic residues predominate over residues D1302 to F1324.

The protein belongs to the RNA polymerase beta' chain family. RpoC2 subfamily. In cyanobacteria the RNAP catalytic core is composed of 2 alpha, 1 beta, 1 beta', 1 gamma and 1 omega subunit. When a sigma factor is associated with the core the holoenzyme is formed, which can initiate transcription. It depends on Zn(2+) as a cofactor.

It catalyses the reaction RNA(n) + a ribonucleoside 5'-triphosphate = RNA(n+1) + diphosphate. Functionally, DNA-dependent RNA polymerase catalyzes the transcription of DNA into RNA using the four ribonucleoside triphosphates as substrates. The chain is DNA-directed RNA polymerase subunit beta' from Thermosynechococcus vestitus (strain NIES-2133 / IAM M-273 / BP-1).